Reading from the N-terminus, the 355-residue chain is Peptide chain release factor 1 (355 aa).

Gln231 carries the post-translational modification N5-methylglutamine.

Belongs to the prokaryotic/mitochondrial release factor family. In terms of processing, methylated by PrmC. Methylation increases the termination efficiency of RF1.

It is found in the cytoplasm. Its function is as follows. Peptide chain release factor 1 directs the termination of translation in response to the peptide chain termination codons UAG and UAA. The chain is Peptide chain release factor 1 from Nautilia profundicola (strain ATCC BAA-1463 / DSM 18972 / AmH).